The chain runs to 87 residues: Large ribosomal subunit protein bL31B (87 aa).

The protein belongs to the bacterial ribosomal protein bL31 family. Type B subfamily. Part of the 50S ribosomal subunit.

The protein is Large ribosomal subunit protein bL31B of Burkholderia ambifaria (strain MC40-6).